Here is a 317-residue protein sequence, read N- to C-terminus: Ribosomal protein L11 methyltransferase (317 aa).

Residues T158, G179, D201, and N244 each contribute to the S-adenosyl-L-methionine site.

It belongs to the methyltransferase superfamily. PrmA family.

Its subcellular location is the cytoplasm. The enzyme catalyses L-lysyl-[protein] + 3 S-adenosyl-L-methionine = N(6),N(6),N(6)-trimethyl-L-lysyl-[protein] + 3 S-adenosyl-L-homocysteine + 3 H(+). In terms of biological role, methylates ribosomal protein L11. The protein is Ribosomal protein L11 methyltransferase of Streptococcus agalactiae serotype III (strain NEM316).